The chain runs to 886 residues: Vam6/Vps39-like protein (886 aa).

The 280-residue stretch at 15–294 (PLQIDCLAAW…RFITSGGSNI (280 aa)) folds into the CNH domain. A CHCR repeat occupies 573–750 (FTEDLPEVES…LLRMYLSPPS (178 aa)).

It belongs to the VAM6/VPS39 family. Homooligomer. Interacts with TGFBR2 and, less efficiently, with TGFBR1; interaction with TGFBR2 is independent of the receptor kinase activity and of the presence of TGF-beta. Also interacts with ACVR2B, but not with BMPR2. Interacts with SMAD4, preferentially following TGF-beta treatment. Does not interact with SAMD2 or SMAD3. Component of the homotypic fusion and vacuole protein sorting (HOPS) complex; the core of which composed of the class C Vps proteins VPS11, VPS16, VPS18 and VPS33A, is associated with VPS39 and VPS41. Interacts with PLEKHM2; involved in VPS39 recruitment to ARL8B-containing lysosomes. Associates with adapter protein complex 3 (AP-3) and clathrin:AP-3 complexes. Interacts with STX17; this interaction is increased in the absence of TMEM39A. Interacts with RAB7, RAB2A and RAB2B. Interacts with RAB2A (GTP-bound); the interaction contributes to obtaining a functional HOPS complex that promotes autophagosome-lysosome membrane fusion driven by STX17-SNAP29-VAMP8. Interacts with RAB39A (GTP-bound) and RAB39B (GTP-bound); interaction with RAB39A contributes to obtaining a functional HOPS complex. As to quaternary structure, (Microbial infection) Interacts with SARS coronavirus-2/SARS-CoV-2 ORF3A protein; the interaction is direct and sequestrates VPS39, thereby preventing HOPS complex from interacting with the autophagosomal SNARE protein STX17. ORF3A enhances the interaction of VPS39 with VPS11 and VPS18, while its interaction with the VPS16:VPS33A module is attenuated. In terms of tissue distribution, widely expressed, with highest levels in heart, skeletal muscle, kidney, pancreas, brain, placenta and spleen.

The protein localises to the cytoplasm. The protein resides in the lysosome membrane. It is found in the late endosome membrane. In terms of biological role, regulator of TGF-beta/activin signaling, inhibiting SMAD3- and activating SMAD2-dependent transcription. Acts by interfering with SMAD3/SMAD4 complex formation, this would lead to inhibition of SMAD3-dependent transcription and relieve SMAD3 inhibition of SMAD2-dependent promoters, thus increasing SMAD2-dependent transcription. Does not affect TGF-beta-induced SMAD2 or SMAD3 phosphorylation, nor SMAD2/SMAD4 complex formation. Functionally, plays a role in vesicle-mediated protein trafficking to lysosomal compartments including the endocytic membrane transport and autophagic pathways. Acts as a component of the HOPS endosomal tethering complex. This complex is proposed to be involved in the Rab5-to-Rab7 endosome conversion probably implicating MON1A/B, and via binding SNAREs and SNARE complexes to mediate tethering and docking events during SNARE-mediated membrane fusion. The HOPS complex is proposed to be recruited to Rab7 on the late endosomal membrane and to regulate late endocytic, phagocytic and autophagic traffic towards lysosomes. Involved in homotypic vesicle fusions between late endosomes and in heterotypic fusions between late endosomes and lysosomes. Required for fusion of endosomes and autophagosomes with lysosomes. The sequence is that of Vam6/Vps39-like protein from Homo sapiens (Human).